Consider the following 316-residue polypeptide: Melanocyte-stimulating hormone receptor (316 aa).

The Extracellular segment spans residues M1–E37. An N-linked (GlcNAc...) asparagine glycan is attached at N29. A helical transmembrane segment spans residues V38–I63. The Cytoplasmic portion of the chain corresponds to A64–P72. Residues M73 to V93 form a helical membrane-spanning segment. Over D94–N117 the chain is Extracellular. A helical membrane pass occupies residues V118–V139. Topologically, residues D140 to R162 are cytoplasmic. A helical membrane pass occupies residues A163 to Y182. Residues D183–C190 lie on the Extracellular side of the membrane. The chain crosses the membrane as a helical span at residues L191 to L210. Over A211–P239 the chain is Cytoplasmic. Residues V240–L265 traverse the membrane as a helical segment. The Extracellular portion of the chain corresponds to C266–N278. The helical transmembrane segment at F279–F299 threads the bilayer. Over H300 to W316 the chain is Cytoplasmic. C314 carries the S-palmitoyl cysteine lipid modification.

This sequence belongs to the G-protein coupled receptor 1 family. As to quaternary structure, interacts with MGRN1, but does not undergo MGRN1-mediated ubiquitination; this interaction competes with GNAS-binding and thus inhibits agonist-induced cAMP production. Interacts with OPN3; the interaction results in a decrease in MC1R-mediated cAMP signaling and ultimately a decrease in melanin production in melanocytes.

The protein resides in the cell membrane. Functionally, receptor for MSH (alpha, beta and gamma) and ACTH. The activity of this receptor is mediated by G proteins which activate adenylate cyclase. Mediates melanogenesis, the production of eumelanin (black/brown) and phaeomelanin (red/yellow), via regulation of cAMP signaling in melanocytes. The protein is Melanocyte-stimulating hormone receptor (MC1R) of Gorilla gorilla gorilla (Western lowland gorilla).